Reading from the N-terminus, the 254-residue chain is Triosephosphate isomerase (254 aa).

9–11 (NWK) is a substrate binding site. The Electrophile role is filled by His98. Glu170 acts as the Proton acceptor in catalysis. Substrate-binding positions include Gly176, Ser215, and 236–237 (GG).

Belongs to the triosephosphate isomerase family. In terms of assembly, homodimer.

It localises to the cytoplasm. It catalyses the reaction D-glyceraldehyde 3-phosphate = dihydroxyacetone phosphate. Its pathway is carbohydrate biosynthesis; gluconeogenesis. It participates in carbohydrate degradation; glycolysis; D-glyceraldehyde 3-phosphate from glycerone phosphate: step 1/1. Involved in the gluconeogenesis. Catalyzes stereospecifically the conversion of dihydroxyacetone phosphate (DHAP) to D-glyceraldehyde-3-phosphate (G3P). This is Triosephosphate isomerase from Buchnera aphidicola subsp. Cinara cedri (strain Cc).